The sequence spans 1340 residues: Early transcription factor large subunit homolog (1340 aa).

Belongs to the asfivirus G1340L family.

It localises to the virion. Its function is as follows. Putative initation factor. This chain is Early transcription factor large subunit homolog, found in African swine fever virus (strain Badajoz 1971 Vero-adapted) (Ba71V).